A 322-amino-acid polypeptide reads, in one-letter code: Ferredoxin--NADP reductase (322 aa).

FAD contacts are provided by D34, Q42, Y47, V87, F120, D279, and T320.

The protein belongs to the ferredoxin--NADP reductase type 2 family. Homodimer. It depends on FAD as a cofactor.

It catalyses the reaction 2 reduced [2Fe-2S]-[ferredoxin] + NADP(+) + H(+) = 2 oxidized [2Fe-2S]-[ferredoxin] + NADPH. The chain is Ferredoxin--NADP reductase from Streptococcus pneumoniae serotype 19F (strain G54).